The chain runs to 85 residues: Photosystem I reaction center subunit PsaK (85 aa).

A run of 2 helical transmembrane segments spans residues 12–34 (TVTWSPKVALVMIVCNVIAIAVG) and 54–76 (GGMGHAALLGTTSLGHIIGIGAI).

This sequence belongs to the PsaG/PsaK family.

The protein resides in the cellular thylakoid membrane. This chain is Photosystem I reaction center subunit PsaK, found in Parasynechococcus marenigrum (strain WH8102).